The chain runs to 255 residues: Geranylgeranylglyceryl phosphate synthase (255 aa).

Mg(2+)-binding residues include aspartate 26 and serine 55. Residues 174–180 (YLEAGSG), 205–206 (GG), and 227–228 (GT) contribute to the sn-glycerol 1-phosphate site.

This sequence belongs to the GGGP/HepGP synthase family. Group II subfamily. It depends on Mg(2+) as a cofactor.

The protein localises to the cytoplasm. The catalysed reaction is sn-glycerol 1-phosphate + (2E,6E,10E)-geranylgeranyl diphosphate = sn-3-O-(geranylgeranyl)glycerol 1-phosphate + diphosphate. It participates in membrane lipid metabolism; glycerophospholipid metabolism. Its function is as follows. Prenyltransferase that catalyzes the transfer of the geranylgeranyl moiety of geranylgeranyl diphosphate (GGPP) to the C3 hydroxyl of sn-glycerol-1-phosphate (G1P). This reaction is the first ether-bond-formation step in the biosynthesis of archaeal membrane lipids. The chain is Geranylgeranylglyceryl phosphate synthase from Thermococcus sibiricus (strain DSM 12597 / MM 739).